A 173-amino-acid polypeptide reads, in one-letter code: Pathogenesis-related protein 1A/1B (173 aa).

An N-terminal signal peptide occupies residues 1–20; it reads MSTSAVLFLLLAVFAAGASA.

Belongs to the thaumatin family.

This Hordeum vulgare (Barley) protein is Pathogenesis-related protein 1A/1B.